Consider the following 561-residue polypeptide: Formate--tetrahydrofolate ligase (561 aa).

70 to 77 (TPAGEGKT) is a binding site for ATP.

This sequence belongs to the formate--tetrahydrofolate ligase family.

The enzyme catalyses (6S)-5,6,7,8-tetrahydrofolate + formate + ATP = (6R)-10-formyltetrahydrofolate + ADP + phosphate. It participates in one-carbon metabolism; tetrahydrofolate interconversion. This chain is Formate--tetrahydrofolate ligase, found in Pelagibacter ubique (strain HTCC1062).